The following is a 989-amino-acid chain: Phosphoenolpyruvate carboxylase (989 aa).

Residues H175 and K630 contribute to the active site.

Belongs to the PEPCase type 1 family. Mg(2+) serves as cofactor.

It carries out the reaction oxaloacetate + phosphate = phosphoenolpyruvate + hydrogencarbonate. Functionally, forms oxaloacetate, a four-carbon dicarboxylic acid source for the tricarboxylic acid cycle. The sequence is that of Phosphoenolpyruvate carboxylase from Prochlorococcus marinus (strain AS9601).